A 369-amino-acid chain; its full sequence is Queuine tRNA-ribosyltransferase (369 aa).

Asp90 functions as the Proton acceptor in the catalytic mechanism. Substrate is bound by residues 90–94 (DSGGF), Asp144, Gln186, and Gly213. Positions 244-250 (GVGKPAD) are RNA binding. Asp263 serves as the catalytic Nucleophile. Residues Cys301, Cys303, Cys306, and His332 each coordinate Zn(2+).

The protein belongs to the queuine tRNA-ribosyltransferase family. In terms of assembly, homodimer. Within each dimer, one monomer is responsible for RNA recognition and catalysis, while the other monomer binds to the replacement base PreQ1. Zn(2+) serves as cofactor.

It catalyses the reaction 7-aminomethyl-7-carbaguanine + guanosine(34) in tRNA = 7-aminomethyl-7-carbaguanosine(34) in tRNA + guanine. The protein operates within tRNA modification; tRNA-queuosine biosynthesis. In terms of biological role, catalyzes the base-exchange of a guanine (G) residue with the queuine precursor 7-aminomethyl-7-deazaguanine (PreQ1) at position 34 (anticodon wobble position) in tRNAs with GU(N) anticodons (tRNA-Asp, -Asn, -His and -Tyr). Catalysis occurs through a double-displacement mechanism. The nucleophile active site attacks the C1' of nucleotide 34 to detach the guanine base from the RNA, forming a covalent enzyme-RNA intermediate. The proton acceptor active site deprotonates the incoming PreQ1, allowing a nucleophilic attack on the C1' of the ribose to form the product. After dissociation, two additional enzymatic reactions on the tRNA convert PreQ1 to queuine (Q), resulting in the hypermodified nucleoside queuosine (7-(((4,5-cis-dihydroxy-2-cyclopenten-1-yl)amino)methyl)-7-deazaguanosine). In Dichelobacter nodosus (strain VCS1703A), this protein is Queuine tRNA-ribosyltransferase.